A 510-amino-acid polypeptide reads, in one-letter code: Histidine ammonia-lyase (510 aa).

The segment at residues 143 to 145 (ASG) is a cross-link (5-imidazolinone (Ala-Gly)). A 2,3-didehydroalanine (Ser) modification is found at S144.

The protein belongs to the PAL/histidase family. In terms of processing, contains an active site 4-methylidene-imidazol-5-one (MIO), which is formed autocatalytically by cyclization and dehydration of residues Ala-Ser-Gly.

It is found in the cytoplasm. It catalyses the reaction L-histidine = trans-urocanate + NH4(+). The protein operates within amino-acid degradation; L-histidine degradation into L-glutamate; N-formimidoyl-L-glutamate from L-histidine: step 1/3. The chain is Histidine ammonia-lyase from Pseudomonas putida (strain ATCC 47054 / DSM 6125 / CFBP 8728 / NCIMB 11950 / KT2440).